A 212-amino-acid polypeptide reads, in one-letter code: Uridine kinase (212 aa).

13–20 (GASASGKS) is a binding site for ATP.

Belongs to the uridine kinase family.

It localises to the cytoplasm. The enzyme catalyses uridine + ATP = UMP + ADP + H(+). It carries out the reaction cytidine + ATP = CMP + ADP + H(+). It participates in pyrimidine metabolism; CTP biosynthesis via salvage pathway; CTP from cytidine: step 1/3. Its pathway is pyrimidine metabolism; UMP biosynthesis via salvage pathway; UMP from uridine: step 1/1. This Shewanella halifaxensis (strain HAW-EB4) protein is Uridine kinase.